Here is a 328-residue protein sequence, read N- to C-terminus: Probable transcription factor At4g00610 (328 aa).

The tract at residues 31 to 143 (AKNKTLVTPS…ERAKTETETG (113 aa)) is disordered. A compositionally biased stretch (polar residues) spans 35-54 (TLVTPSTVKKSSDVASTSKK). Acidic residues predominate over residues 84–108 (SEEEEEDEPSSDSESGSESESDTEA). Over residues 122–143 (NEKRQSEGKPEEERAKTETETG) the composition is skewed to basic and acidic residues.

It belongs to the GeBP family.

This is Probable transcription factor At4g00610 from Arabidopsis thaliana (Mouse-ear cress).